The following is a 198-amino-acid chain: NAD(P)H dehydrogenase (quinone) (198 aa).

The Flavodoxin-like domain occupies Ile4–Val189. FMN-binding positions include Ser10–Ile15 and Thr78–Phe80. Tyr12 provides a ligand contact to NAD(+). A substrate-binding site is contributed by Trp98. FMN contacts are provided by residues Ser113 to Gly118 and His133.

It belongs to the WrbA family. FMN is required as a cofactor.

The catalysed reaction is a quinone + NADH + H(+) = a quinol + NAD(+). It catalyses the reaction a quinone + NADPH + H(+) = a quinol + NADP(+). This is NAD(P)H dehydrogenase (quinone) from Salmonella paratyphi A (strain ATCC 9150 / SARB42).